Reading from the N-terminus, the 345-residue chain is MDLLKELESLVPELERGLGQASSLQELEEQRIAFLGRKGRLAQVMAHLPELAPAERPRVGQAANTVKQALTELFEQRKVVLEQAKEAAALSRFDPSLPGRMPWRGSLHPVTLVMEEICSVFGALGYDIVTGPEVENDYHNFEALNMPPEHPARDMQDTLYITESILMRTHTSPLQVRTMKSLRPPVAAIAPGKVYRRDSDITHTPMFHQIEGFMVDHNVSMAELRGTLTSFLRTVFGGDTRVRFRPSFFPFTEPSAEVDISCCICGGKGHVGNEPCRVCKTTGWVEILGCGMIDPEVFKSVGYDPEVYTGFAFGLGVERVAMLKYGIGDLRMFFENDVRFLSQFA.

Residue Glu-253 participates in Mg(2+) binding.

It belongs to the class-II aminoacyl-tRNA synthetase family. Phe-tRNA synthetase alpha subunit type 1 subfamily. In terms of assembly, tetramer of two alpha and two beta subunits. Mg(2+) serves as cofactor.

Its subcellular location is the cytoplasm. The catalysed reaction is tRNA(Phe) + L-phenylalanine + ATP = L-phenylalanyl-tRNA(Phe) + AMP + diphosphate + H(+). In Nitratidesulfovibrio vulgaris (strain DP4) (Desulfovibrio vulgaris), this protein is Phenylalanine--tRNA ligase alpha subunit.